We begin with the raw amino-acid sequence, 642 residues long: Threonine--tRNA ligase (642 aa).

The region spanning 1 to 61 is the TGS domain; that stretch reads MPIITLPDGS…EHDASLEIIT (61 aa). The interval 244–535 is catalytic; the sequence is DHRKIGKQLD…LIEEYAGFFP (292 aa). Zn(2+)-binding residues include Cys-335, His-386, and His-512.

This sequence belongs to the class-II aminoacyl-tRNA synthetase family. In terms of assembly, homodimer. Zn(2+) is required as a cofactor.

Its subcellular location is the cytoplasm. The enzyme catalyses tRNA(Thr) + L-threonine + ATP = L-threonyl-tRNA(Thr) + AMP + diphosphate + H(+). Its function is as follows. Catalyzes the attachment of threonine to tRNA(Thr) in a two-step reaction: L-threonine is first activated by ATP to form Thr-AMP and then transferred to the acceptor end of tRNA(Thr). Also edits incorrectly charged L-seryl-tRNA(Thr). The protein is Threonine--tRNA ligase of Vibrio cholerae serotype O1 (strain ATCC 39541 / Classical Ogawa 395 / O395).